Reading from the N-terminus, the 508-residue chain is Histidine ammonia-lyase (508 aa).

A cross-link (5-imidazolinone (Ala-Gly)) is located at residues Ala143–Gly145. The residue at position 144 (Ser144) is a 2,3-didehydroalanine (Ser).

The protein belongs to the PAL/histidase family. In terms of processing, contains an active site 4-methylidene-imidazol-5-one (MIO), which is formed autocatalytically by cyclization and dehydration of residues Ala-Ser-Gly.

It localises to the cytoplasm. It catalyses the reaction L-histidine = trans-urocanate + NH4(+). The protein operates within amino-acid degradation; L-histidine degradation into L-glutamate; N-formimidoyl-L-glutamate from L-histidine: step 1/3. The sequence is that of Histidine ammonia-lyase from Klebsiella pneumoniae subsp. pneumoniae (strain ATCC 700721 / MGH 78578).